The primary structure comprises 465 residues: Lipase 10 (465 aa).

Positions 1–16 (MKTLLIFLAFLSSIFA) are cleaved as a signal peptide. Cys-112 and Cys-285 are disulfide-bonded. Ser-196 functions as the Charge relay system in the catalytic mechanism. Asn-231 and Asn-319 each carry an N-linked (GlcNAc...) asparagine glycan. Active-site charge relay system residues include Asp-348 and His-381. Cys-364 and Cys-409 form a disulfide bridge.

It belongs to the AB hydrolase superfamily. Lipase family. Class Lip subfamily.

It is found in the secreted. The catalysed reaction is a triacylglycerol + H2O = a diacylglycerol + a fatty acid + H(+). In terms of biological role, secreted lipase that is able to hydrolyze both the neutral triacylglycerols and the monopalmitate ester Tween 40, allowing the use of hydrolyzed products as carbon sources. Has broad lipolytic activity, which may be important for colonization and subsequent infection, therefore contributing to the persistence and virulence in human tissue. The sequence is that of Lipase 10 from Candida albicans (strain SC5314 / ATCC MYA-2876) (Yeast).